The sequence spans 126 residues: Glycerol dehydrogenase small subunit (126 aa).

4 helical membrane-spanning segments follow: residues 13–33 (WLTL…VIAG), 41–61 (GSVY…FMLM), 67–87 (AFLY…EVGF), and 92–112 (LLPR…TIPV).

Its subcellular location is the cell membrane. The catalysed reaction is glycerol + A = dihydroxyacetone + AH2. Catalyzes the oxidation of glycerol to glycerone. Also acts, more slowly, on a number of other polyols including D-sorbitol, D-arabinitol, D-mannitol, meso-erythritol, adonitol and propylene glycol. The sequence is that of Glycerol dehydrogenase small subunit (sldB) from Gluconobacter oxydans (strain 621H) (Gluconobacter suboxydans).